A 192-amino-acid chain; its full sequence is dCTP deaminase, dUMP-forming (192 aa).

DCTP is bound by residues 101-106 (KSSLGR), D119, 127-129 (TLE), Q148, Y162, and Q174. Residue E129 is the Proton donor/acceptor of the active site. Residues 165-184 (GAYGNRYQGQRGPTASRSHL) form a disordered region. Residues 171–183 (YQGQRGPTASRSH) show a composition bias toward polar residues.

It belongs to the dCTP deaminase family. As to quaternary structure, homotrimer.

The catalysed reaction is dCTP + 2 H2O = dUMP + NH4(+) + diphosphate. Its pathway is pyrimidine metabolism; dUMP biosynthesis; dUMP from dCTP: step 1/1. Functionally, bifunctional enzyme that catalyzes both the deamination of dCTP to dUTP and the hydrolysis of dUTP to dUMP without releasing the toxic dUTP intermediate. This is dCTP deaminase, dUMP-forming from Kocuria rhizophila (strain ATCC 9341 / DSM 348 / NBRC 103217 / DC2201).